The following is a 453-amino-acid chain: MTTDTIVAQATAPGRGGVGIIRISGDKATNVAMAVLGHLPKPRYADYCYFKSASGQVIDQGIALFFKGPNSFTGEDVLELQGHGGQIVLDMLIKRVLEVEGIRIAKPGEFSEQAFMNDKLDLTQAEAIADLIDATSEQAAKSALQSLQGEFSKEVHELVDQVTHLRLYVEAAIDFPDEEVDFLSDGKIANALYKIIDKLIAVQASAKQGSIIREGMKVVIAGRPNAGKSSLLNALAGKESAIVTEIAGTTRDVLREHIHLDGMPLHIIDTAGLRDTTDTVEQIGIERAWNEINSADRVLFMVDGTTTTAVDPHDIWPDFINRLPTNLGVTVIRNKADLTGENLEMTEEKGYSVYRISAKTGLGVDELKQHLKSLMGYQSNLEGGFIARRRHLEALEIAASHLQLGKEQLEVYLAGELLAEELRMAQLALSEITGRFTSDDLLGKIFSSFCIGK.

(6S)-5-formyl-5,6,7,8-tetrahydrofolate-binding residues include arginine 22, glutamate 79, and lysine 119. The TrmE-type G domain maps to 215 to 376; sequence GMKVVIAGRP…LKQHLKSLMG (162 aa). Asparagine 225 is a binding site for K(+). GTP is bound by residues 225–230, 244–250, 269–272, and 334–337; these read NAGKSS, TEIAGTT, DTAG, and NKAD. Serine 229 contacts Mg(2+). Residues threonine 244, isoleucine 246, and threonine 249 each coordinate K(+). A Mg(2+)-binding site is contributed by threonine 250. Position 453 (lysine 453) interacts with (6S)-5-formyl-5,6,7,8-tetrahydrofolate.

It belongs to the TRAFAC class TrmE-Era-EngA-EngB-Septin-like GTPase superfamily. TrmE GTPase family. Homodimer. Heterotetramer of two MnmE and two MnmG subunits. Requires K(+) as cofactor.

Its subcellular location is the cytoplasm. Its function is as follows. Exhibits a very high intrinsic GTPase hydrolysis rate. Involved in the addition of a carboxymethylaminomethyl (cmnm) group at the wobble position (U34) of certain tRNAs, forming tRNA-cmnm(5)s(2)U34. The sequence is that of tRNA modification GTPase MnmE from Shewanella oneidensis (strain ATCC 700550 / JCM 31522 / CIP 106686 / LMG 19005 / NCIMB 14063 / MR-1).